The chain runs to 419 residues: Acyl transferase 9 (419 aa).

Active-site proton acceptor residues include His161 and Asp362.

This sequence belongs to the plant acyltransferase family.

Involved in the incorporation of ferulate into the cell wall. May act as arabinoxylan feruloyl transferase. The protein is Acyl transferase 9 of Oryza sativa subsp. japonica (Rice).